Here is a 342-residue protein sequence, read N- to C-terminus: NADH-quinone oxidoreductase subunit H (342 aa).

8 consecutive transmembrane segments (helical) span residues 15 to 35 (LLII…LMVA), 86 to 106 (VLFI…WAVV), 119 to 139 (VGVL…IIAG), 159 to 179 (VSYE…VGSL), 190 to 210 (HVWF…SGLA), 251 to 271 (FMIC…PFDI), 277 to 297 (VPGP…FFWV), and 316 to 336 (VFLP…ELAG).

The protein belongs to the complex I subunit 1 family. As to quaternary structure, NDH-1 is composed of 14 different subunits. Subunits NuoA, H, J, K, L, M, N constitute the membrane sector of the complex.

It localises to the cell inner membrane. It catalyses the reaction a quinone + NADH + 5 H(+)(in) = a quinol + NAD(+) + 4 H(+)(out). NDH-1 shuttles electrons from NADH, via FMN and iron-sulfur (Fe-S) centers, to quinones in the respiratory chain. The immediate electron acceptor for the enzyme in this species is believed to be ubiquinone. Couples the redox reaction to proton translocation (for every two electrons transferred, four hydrogen ions are translocated across the cytoplasmic membrane), and thus conserves the redox energy in a proton gradient. This subunit may bind ubiquinone. The chain is NADH-quinone oxidoreductase subunit H from Granulibacter bethesdensis (strain ATCC BAA-1260 / CGDNIH1).